We begin with the raw amino-acid sequence, 884 residues long: Receptor-like protein 39 (884 aa).

Positions 1-24 (MSELLFRLNFLLLLLLSCVSLASS) are cleaved as a signal peptide. Residues 25 to 847 (FFSFNDPVVG…EEEEQVLNWK (823 aa)) are Extracellular-facing. N-linked (GlcNAc...) asparagine glycosylation is found at Asn59, Asn71, and Asn92. 10 LRR repeats span residues 98–122 (FHQL…EFGM), 124–146 (NKLE…SFSN), 147–170 (LSML…VRNL), 171–196 (RKLT…LFEL), 197–223 (HNLA…NLNK), 225–245 (ELLD…ISNL), 246–268 (TQLT…VQNL), 269–292 (TKLS…LFTM), 294–318 (FLSY…SLSS), and 320–344 (LENL…LINL). N-linked (GlcNAc...) asparagine glycosylation is present at Asn146. Residues Asn190, Asn208, Asn244, and Asn267 are each glycosylated (N-linked (GlcNAc...) asparagine). N-linked (GlcNAc...) asparagine glycans are attached at residues Asn304 and Asn313. The LRR 11; degenerate repeat unit spans residues 345-365 (KELHLSFLNTSYPINLKLFSS). Asn353 is a glycosylation site (N-linked (GlcNAc...) asparagine). LRR repeat units follow at residues 366 to 391 (LKYL…SYIP), 392 to 413 (STLE…ILKT), 414 to 438 (LPNL…LWSL), 440 to 463 (RLSS…ILVN), and 464 to 487 (SSVR…PLSV). The N-linked (GlcNAc...) asparagine glycan is linked to Asn403. Residue Asn463 is glycosylated (N-linked (GlcNAc...) asparagine). One copy of the LRR 17; degenerate repeat lies at 488-507 (NYFSARNNRYGGDIPLSICS). 10 LRR repeats span residues 508-529 (RRSL…PPCP), 530-553 (SNFL…YYAD), 554-577 (APLR…LLNC), 579-601 (ALQF…LKAL), 602-625 (PKLQ…NQGS), 628-652 (FPEL…FFEN), 702-725 (SSSA…IGLL), 726-749 (KALI…LANL), 750-773 (KKIE…IGTL), and 775-798 (FLAY…QITG). Asn520 is a glycosylation site (N-linked (GlcNAc...) asparagine). An N-linked (GlcNAc...) asparagine glycan is attached at Asn576. A glycan (N-linked (GlcNAc...) asparagine) is linked at Asn732. Asn780 carries N-linked (GlcNAc...) asparagine glycosylation. Residues 848–868 (GVGIGYGVGVLLGLAIAQLIA) traverse the membrane as a helical segment. The Cytoplasmic portion of the chain corresponds to 869–884 (SYKPEWLVFLFQSRNH).

The protein belongs to the RLP family.

It localises to the cell membrane. The sequence is that of Receptor-like protein 39 from Arabidopsis thaliana (Mouse-ear cress).